Consider the following 103-residue polypeptide: Small ribosomal subunit protein uS10 (103 aa).

This sequence belongs to the universal ribosomal protein uS10 family. Part of the 30S ribosomal subunit.

Its function is as follows. Involved in the binding of tRNA to the ribosomes. The polypeptide is Small ribosomal subunit protein uS10 (Neisseria meningitidis serogroup C / serotype 2a (strain ATCC 700532 / DSM 15464 / FAM18)).